The chain runs to 497 residues: Cysteine--tRNA ligase (497 aa).

A Zn(2+)-binding site is contributed by cysteine 34. The 'HIGH' region motif lies at proline 36–asparagine 46. Zn(2+) contacts are provided by cysteine 243, histidine 268, and glutamate 272. The short motif at lysine 301 to serine 305 is the 'KMSKS' region element. Position 304 (lysine 304) interacts with ATP. The tract at residues leucine 478–arginine 497 is disordered. A compositionally biased stretch (basic and acidic residues) spans aspartate 480–arginine 497.

This sequence belongs to the class-I aminoacyl-tRNA synthetase family. Monomer. It depends on Zn(2+) as a cofactor.

It is found in the cytoplasm. The catalysed reaction is tRNA(Cys) + L-cysteine + ATP = L-cysteinyl-tRNA(Cys) + AMP + diphosphate. The sequence is that of Cysteine--tRNA ligase from Chelativorans sp. (strain BNC1).